The chain runs to 806 residues: MKQDVTVELTGGKKLHFETGRMAKQASGAALVTQGESVVLATAVAAPDPKEGIDFFPLTVDYREYAYAGGRIPGGFIKREGRPSEREILTSRQIDRPIRPLFPEGFRNETQVIALVFSADKENDPDIVGINAASAALALSDIPFAGPVGAVRVGYVNGEYVINPSYAERRDSSINITVVGTMDGIVMIESGSAEVPEEVVLGAIDFGHTEIKKIVAAINELAAKAGKTKRAVTAPEFDEAYFETLKNKIGARLADALDTKAHPKTESYALVKQIKDELAAEIPADENAGAAKKKLAHYYELLREKIFREQVTKDRVRPDRRGFDEIRQITIEVGVLPRTHGSALFTRGETQALVTATLGTNDDSQRLETFEGEQKKRFMLHYNFPPFSVGEVGRMTGVGRREVGHGALAERAISAVLPGEDESPYALRVVSDILESNGSSSMASVCGASLALMDAGIPLKGAVAGVAMGLVKEGDEYAILTDIAGAEDHYGDMDFKVAGTRKGITALQMDIKISGITGQIMREAMEQARRGRMFLLDKMDEILAAPREEKSKHAPQIRTVQIPTDKIRDLIGPGGKTIRGIIEATQVKIDVDDTGRVNIASSDEEGLKKALAMINDLTAVPEVGKTYLGKVVRLAEFGAFVEIFPGTDGLLHISEIAEHRVKEVKDELHEGDQVMVKVLGVEGNRIKLSRKAVIREQRQKLGLPEPGAEAPAAAEGQPRAERAERQPSSNASTITIEGGEDFDDFDEEGGEGEGEDENFNREDTPNSAPGERRPGGAGAAGNRGRRRRRGRGRGPGQGGGGNRGPQ.

D488 and D494 together coordinate Mg(2+). The KH domain occupies P555–I614. In terms of domain architecture, S1 motif spans G624 to K691. The tract at residues R698 to Q806 is disordered. The span at P704–Q717 shows a compositional bias: low complexity. The span at G738–E757 shows a compositional bias: acidic residues. A compositionally biased stretch (basic and acidic residues) spans N758–P774. The span at R783–G792 shows a compositional bias: basic residues. A compositionally biased stretch (gly residues) spans R793–Q806.

It belongs to the polyribonucleotide nucleotidyltransferase family. Mg(2+) serves as cofactor.

It is found in the cytoplasm. The catalysed reaction is RNA(n+1) + phosphate = RNA(n) + a ribonucleoside 5'-diphosphate. In terms of biological role, involved in mRNA degradation. Catalyzes the phosphorolysis of single-stranded polyribonucleotides processively in the 3'- to 5'-direction. This chain is Polyribonucleotide nucleotidyltransferase, found in Acidobacterium capsulatum (strain ATCC 51196 / DSM 11244 / BCRC 80197 / JCM 7670 / NBRC 15755 / NCIMB 13165 / 161).